The chain runs to 248 residues: Flavodoxin/ferredoxin--NADP reductase (248 aa).

The 100-residue stretch at 2 to 101 (ADWVTGKVTK…SEAAGFFVLD (100 aa)) folds into the FAD-binding FR-type domain. Residues 50–53 (RAYS), Y66, 74–76 (KLS), and T116 each bind FAD. NADP(+)-binding positions include 143–144 (AR), 173–174 (SR), R184, 214–216 (NPQ), and D220. 247–248 (YW) provides a ligand contact to FAD.

This sequence belongs to the ferredoxin--NADP reductase type 1 family. The cofactor is FAD.

It is found in the cytoplasm. The catalysed reaction is 2 reduced [2Fe-2S]-[ferredoxin] + NADP(+) + H(+) = 2 oxidized [2Fe-2S]-[ferredoxin] + NADPH. It catalyses the reaction reduced [flavodoxin] + NADP(+) = oxidized [flavodoxin] + NADPH + 2 H(+). In terms of biological role, transports electrons between flavodoxin or ferredoxin and NADPH. The protein is Flavodoxin/ferredoxin--NADP reductase (fpr) of Shigella flexneri.